Consider the following 108-residue polypeptide: MSSTQFDHVTVIKKSNVYFGGACISHTVQFEDGTKKTLGVILPTEQPLTFETHVPERMEIISGECRVKIADSNESELFRAGQSFYVPGNSVFKIETDEVLDYVCHLEG.

The protein belongs to the nucleoside phosphorylase PpnP family.

The catalysed reaction is a purine D-ribonucleoside + phosphate = a purine nucleobase + alpha-D-ribose 1-phosphate. It carries out the reaction adenosine + phosphate = alpha-D-ribose 1-phosphate + adenine. The enzyme catalyses cytidine + phosphate = cytosine + alpha-D-ribose 1-phosphate. It catalyses the reaction guanosine + phosphate = alpha-D-ribose 1-phosphate + guanine. The catalysed reaction is inosine + phosphate = alpha-D-ribose 1-phosphate + hypoxanthine. It carries out the reaction thymidine + phosphate = 2-deoxy-alpha-D-ribose 1-phosphate + thymine. The enzyme catalyses uridine + phosphate = alpha-D-ribose 1-phosphate + uracil. It catalyses the reaction xanthosine + phosphate = alpha-D-ribose 1-phosphate + xanthine. Catalyzes the phosphorolysis of diverse nucleosides, yielding D-ribose 1-phosphate and the respective free bases. Can use uridine, adenosine, guanosine, cytidine, thymidine, inosine and xanthosine as substrates. Also catalyzes the reverse reactions. The chain is Pyrimidine/purine nucleoside phosphorylase from Acinetobacter baumannii (strain AB307-0294).